Reading from the N-terminus, the 683-residue chain is Zinc finger protein 418 (683 aa).

The KRAB domain occupies 48–123 (VTIEDVTVYF…TPKQGQLRQK (76 aa)). Residues 102 to 120 (QSLSQTEAPQVRTPKQGQL) are compositionally biased toward polar residues. Disordered stretches follow at residues 102 to 124 (QSLS…RQKP) and 209 to 247 (DIPN…QHRL). The segment covering 225–239 (FHRDKNNSESDEYKK) has biased composition (basic and acidic residues). 14 consecutive C2H2-type zinc fingers follow at residues 287-309 (YECH…QRRH), 315-337 (YKCG…CRVH), 343-365 (FECL…QRTH), 371-393 (YECS…QRTH), 399-421 (YECG…QRVH), 427-449 (YHCE…SKIH), 455-477 (YECG…QRTH), 483-505 (YECR…RRIH), 511-533 (YECE…QRVH), 539-561 (YKCE…QRTH), 567-589 (YECA…QKIH), 595-617 (YHCD…QRVH), 623-645 (YTCG…RRIH), and 651-673 (YECD…QLLH).

The protein belongs to the krueppel C2H2-type zinc-finger protein family.

The protein localises to the nucleus. Functionally, transcriptional repressor. May play a role as regulator of the ubiquitin-proteasome system and autophagy-lysosomal pathway. The sequence is that of Zinc finger protein 418 from Rattus norvegicus (Rat).